We begin with the raw amino-acid sequence, 316 residues long: Acetyl-coenzyme A carboxylase carboxyl transferase subunit beta (316 aa).

Residues Leu39–Met308 form the CoA carboxyltransferase N-terminal domain. Zn(2+)-binding residues include Cys43, Cys46, Cys62, and Cys65. A C4-type zinc finger spans residues Cys43–Cys65.

It belongs to the AccD/PCCB family. Acetyl-CoA carboxylase is a heterohexamer composed of biotin carboxyl carrier protein (AccB), biotin carboxylase (AccC) and two subunits each of ACCase subunit alpha (AccA) and ACCase subunit beta (AccD). Requires Zn(2+) as cofactor.

Its subcellular location is the cytoplasm. It catalyses the reaction N(6)-carboxybiotinyl-L-lysyl-[protein] + acetyl-CoA = N(6)-biotinyl-L-lysyl-[protein] + malonyl-CoA. The protein operates within lipid metabolism; malonyl-CoA biosynthesis; malonyl-CoA from acetyl-CoA: step 1/1. Component of the acetyl coenzyme A carboxylase (ACC) complex. Biotin carboxylase (BC) catalyzes the carboxylation of biotin on its carrier protein (BCCP) and then the CO(2) group is transferred by the transcarboxylase to acetyl-CoA to form malonyl-CoA. The sequence is that of Acetyl-coenzyme A carboxylase carboxyl transferase subunit beta from Nostoc sp. (strain PCC 7120 / SAG 25.82 / UTEX 2576).